Reading from the N-terminus, the 253-residue chain is AA9 family lytic polysaccharide monooxygenase F (253 aa).

Residues 1 to 16 (MKVLATLLASVGLVAA) form the signal peptide. H17 lines the Cu(2+) pocket. N22 carries an N-linked (GlcNAc...) asparagine glycan. Cystine bridges form between C75–C193 and C163–C253. Cu(2+) is bound at residue H105. N-linked (GlcNAc...) asparagine glycosylation is present at N143. Residues H179 and Q188 each coordinate O2. Residue Y190 coordinates Cu(2+).

Belongs to the polysaccharide monooxygenase AA9 family. The cofactor is Cu(2+).

The protein resides in the secreted. It catalyses the reaction [(1-&gt;4)-beta-D-glucosyl]n+m + reduced acceptor + O2 = 4-dehydro-beta-D-glucosyl-[(1-&gt;4)-beta-D-glucosyl]n-1 + [(1-&gt;4)-beta-D-glucosyl]m + acceptor + H2O.. Its function is as follows. Lytic polysaccharide monooxygenase (LPMO) that depolymerizes crystalline and amorphous polysaccharides via the oxidation of scissile alpha- or beta-(1-4)-glycosidic bonds, yielding C1 or C4 oxidation products. Catalysis by LPMOs requires the reduction of the active-site copper from Cu(II) to Cu(I) by a reducing agent and H(2)O(2) or O(2) as a cosubstrate. The chain is AA9 family lytic polysaccharide monooxygenase F from Podospora anserina (strain S / ATCC MYA-4624 / DSM 980 / FGSC 10383) (Pleurage anserina).